The sequence spans 347 residues: Probable dual-specificity RNA methyltransferase RlmN (347 aa).

Glutamate 94 (proton acceptor) is an active-site residue. The Radical SAM core domain occupies 100-319 (YPSRTIACIS…LDTLVKNGID (220 aa)). Cysteines 107 and 334 form a disulfide. Positions 114, 118, and 121 each coordinate [4Fe-4S] cluster. S-adenosyl-L-methionine is bound by residues 161–162 (GE), serine 193, 216–218 (SLH), and asparagine 292. Residue cysteine 334 is the S-methylcysteine intermediate of the active site.

The protein belongs to the radical SAM superfamily. RlmN family. [4Fe-4S] cluster is required as a cofactor.

The protein resides in the cytoplasm. It catalyses the reaction adenosine(2503) in 23S rRNA + 2 reduced [2Fe-2S]-[ferredoxin] + 2 S-adenosyl-L-methionine = 2-methyladenosine(2503) in 23S rRNA + 5'-deoxyadenosine + L-methionine + 2 oxidized [2Fe-2S]-[ferredoxin] + S-adenosyl-L-homocysteine. It carries out the reaction adenosine(37) in tRNA + 2 reduced [2Fe-2S]-[ferredoxin] + 2 S-adenosyl-L-methionine = 2-methyladenosine(37) in tRNA + 5'-deoxyadenosine + L-methionine + 2 oxidized [2Fe-2S]-[ferredoxin] + S-adenosyl-L-homocysteine. Functionally, specifically methylates position 2 of adenine 2503 in 23S rRNA and position 2 of adenine 37 in tRNAs. This Petrotoga mobilis (strain DSM 10674 / SJ95) protein is Probable dual-specificity RNA methyltransferase RlmN.